The following is a 396-amino-acid chain: Elongation factor Tu (396 aa).

Residues 11 to 205 enclose the tr-type G domain; sequence KPHVNIGTIG…TIDEYIPTPV (195 aa). The interval 20-27 is G1; sequence GHVDHGKT. Residue 20–27 participates in GTP binding; that stretch reads GHVDHGKT. Thr27 contacts Mg(2+). The interval 61–65 is G2; sequence GITIN. Residues 82-85 are G3; the sequence is DAPG. Residues 82–86 and 137–140 each bind GTP; these read DAPGH and NKTD. A G4 region spans residues 137–140; that stretch reads NKTD. The segment at 175–177 is G5; the sequence is SAL.

It belongs to the TRAFAC class translation factor GTPase superfamily. Classic translation factor GTPase family. EF-Tu/EF-1A subfamily. In terms of assembly, monomer.

The protein resides in the cytoplasm. It catalyses the reaction GTP + H2O = GDP + phosphate + H(+). In terms of biological role, GTP hydrolase that promotes the GTP-dependent binding of aminoacyl-tRNA to the A-site of ribosomes during protein biosynthesis. The polypeptide is Elongation factor Tu (Lacticaseibacillus casei (strain BL23) (Lactobacillus casei)).